The sequence spans 509 residues: 2,3-bisphosphoglycerate-independent phosphoglycerate mutase (509 aa).

Position 11 (D11) interacts with Mn(2+). Phosphotyrosine is present on Y35. S61 serves as a coordination point for Mn(2+). S61 (phosphoserine intermediate) is an active-site residue. Substrate-binding positions include H122, 152–153 (RD), R184, R190, 260–263 (RPDR), and K335. Mn(2+) contacts are provided by D402, H406, D443, H444, and H461.

Belongs to the BPG-independent phosphoglycerate mutase family. As to quaternary structure, monomer. Mn(2+) is required as a cofactor.

The catalysed reaction is (2R)-2-phosphoglycerate = (2R)-3-phosphoglycerate. It functions in the pathway carbohydrate degradation; glycolysis; pyruvate from D-glyceraldehyde 3-phosphate: step 3/5. Functionally, essential for rapid growth and for sporulation. Catalyzes the interconversion of 2-phosphoglycerate and 3-phosphoglycerate. This Bacillus cereus (strain ATCC 10987 / NRS 248) protein is 2,3-bisphosphoglycerate-independent phosphoglycerate mutase.